A 262-amino-acid chain; its full sequence is Probable ketoamine kinase TTHA1179 (262 aa).

Position 79–81 (Ala79–Leu81) interacts with ATP. Asp172 (proton acceptor) is an active-site residue.

It belongs to the fructosamine kinase family.

The enzyme catalyses N(6)-(D-ribulosyl)-L-lysine + ATP = N(6)-(3-O-phospho-D-ribulosyl)-L-lysine + ADP + H(+). The catalysed reaction is N(6)-(D-erythrulosyl)-L-lysine + ATP = N(6)-(3-O-phospho-D-erythrulosyl)-L-lysine + ADP + H(+). It carries out the reaction N(6)-D-ribulosyl-L-lysyl-[protein] + ATP = N(6)-(3-O-phospho-D-ribulosyl)-L-lysyl-[protein] + ADP + H(+). It catalyses the reaction N(6)-(D-erythrulosyl)-L-lysyl-[protein] + ATP = N(6)-(3-O-phospho-D-erythrulosyl)-L-lysyl-[protein] + ADP + H(+). Its function is as follows. Ketoamine kinase that phosphorylates ketoamines, such as erythruloselysine and ribuloselysine, on the third carbon of the sugar moiety to generate ketoamine 3-phosphate. Has higher activity on free lysine (erythruloselysine and ribuloselysine), than on ribuloselysine and erythruloselysine residues on glycated proteins. The sequence is that of Probable ketoamine kinase TTHA1179 from Thermus thermophilus (strain ATCC 27634 / DSM 579 / HB8).